The primary structure comprises 613 residues: MSKQFVRSAKNMMKGYSSTQVLVRDATANDSRTPSIDTLDDLAQRSYDSVDFFEIMDMLDKRLNDKGKYWRHVAKSLTVLDYLVRFGSENCVLWCRENFYVIKTLREFRHENESGFDEGQIIRVKAKELVSLLNDEERLREERSMNTRNRRANRAARPRPRRQRTRSNPHDSSPSYQDDLEKALEESRITAQEDEQRRRELAQYDDEDPDFQAALQLSKEEEELKQLQELQRLQKQQQSLSQFQAPLQQQQPQQQPAYYDIFGNPISQDEYLQYQYQQDQEQAMAQQRWLDQQQEQQQLAEQQYFQQQQQAAAAASALQQQQTAANMQQQQQQPADFQQPLPTGSNNPFSMDNLERQKQEQQHAQLQRQQEEARQQQEQLKLQQLQRQQQEEAQLHQKRQEEAQLQQQQAQLLQQQAQFQQQQPLKQTRTGNQSISDKYSDLNTLLATGTGIDTFGNTGEARIPAQHTKTGTFINSQGTGYKQVTNEPKNNPFLSNQYTGLPSTNIVPTQTGYGFGNQPQSPPTNSPQQNPTGISYSQPQQQQQPQQQPQYMQNFQQQQPQYAQNFQQQPQYTQNYQQQPQYIQPHQQQQQQQQQQQQQQGYTPDQGVSLIDL.

The ENTH domain occupies 11-143; that stretch reads NMMKGYSSTQ…NDEERLREER (133 aa). Disordered regions lie at residues 140–208, 323–351, and 356–375; these read REER…DDED, TAAN…PFSM, and RQKQ…EARQ. Residues 148–167 show a composition bias toward basic residues; that stretch reads RNRRANRAARPRPRRQRTRS. Thr-165 carries the post-translational modification Phosphothreonine. Ser-167 carries the post-translational modification Phosphoserine. UIM domains lie at 175-194 and 206-225; these read SYQD…AQED and DEDP…EELK. Residues 179–188 are compositionally biased toward basic and acidic residues; sequence DLEKALEESR. Residues 323 to 339 show a composition bias toward low complexity; that stretch reads TAANMQQQQQQPADFQQ. Positions 340–350 are enriched in polar residues; the sequence is PLPTGSNNPFS. Residue Lys-426 forms a Glycyl lysine isopeptide (Lys-Gly) (interchain with G-Cter in ubiquitin) linkage. Residue Thr-430 is modified to Phosphothreonine. Residue Ser-434 is modified to Phosphoserine. Thr-450, Thr-468, and Thr-470 each carry phosphothreonine. A compositionally biased stretch (polar residues) spans 471 to 512; the sequence is GTFINSQGTGYKQVTNEPKNNPFLSNQYTGLPSTNIVPTQTG. A disordered region spans residues 471–613; that stretch reads GTFINSQGTG…PDQGVSLIDL (143 aa). Residues 526–600 are compositionally biased toward low complexity; the sequence is SPQQNPTGIS…QQQQQQQQQQ (75 aa).

Belongs to the epsin family. Post-translationally, phosphorylated by PRK1.

It localises to the cytoplasm. The protein localises to the membrane. Binds to membranes enriched in phosphatidylinositol 3,5-bisphosphate (PtdIns(3,5)P2) and phosphatidylinositol 4,5-bisphosphate (PtdIns(4,5)P2). Required for endocytosis and localization of actin. The chain is Epsin-2 (ENT2) from Saccharomyces cerevisiae (strain ATCC 204508 / S288c) (Baker's yeast).